We begin with the raw amino-acid sequence, 543 residues long: Zinc finger protein tra-4 (543 aa).

The tract at residues 1 to 38 is disordered; it reads MDDPNQCTIKQEDSITRPRPTEAPTIQNLKQEPAIEEG. The segment covering 10–20 has biased composition (basic and acidic residues); the sequence is KQEDSITRPRP. 7 consecutive C2H2-type zinc fingers follow at residues 218-241, 327-350, 381-406, 413-436, 442-464, 470-493, and 495-518; these read VRCK…RDKH, PQCP…AKKH, YVCF…KKFH, FRCS…KMSH, FQCH…ERMH, FECK…RDEH, and YVCA…YEEH.

This sequence belongs to the krueppel C2H2-type zinc-finger protein family. Interacts with histone deacetylase hda-1. May interact with nasp-1.

It localises to the nucleus. Functionally, probable transcription factor. Promotes normal hermaphrodite (XX) development, in concert with histone deacetylase hda-1 and nasp-1, perhaps as components of a complex. May cooperate with transcription factor tra-1 to repress male-specific genes in hermaphrodites. Synthetic multivulva (synMuv) class B protein, required to repress the induction of vulval development by let-60 Ras signaling. The polypeptide is Zinc finger protein tra-4 (Caenorhabditis elegans).